Here is a 218-residue protein sequence, read N- to C-terminus: Oxaloacetate decarboxylase, mitochondrial (218 aa).

The N-terminal 18 residues, 1–18, are a transit peptide targeting the mitochondrion; that stretch reads MNKFWETGRKIVAVGRNY. Mg(2+) is bound by residues Glu-63, Glu-65, and Asp-94.

It belongs to the FAH family. In terms of assembly, homodimer. It depends on Mg(2+) as a cofactor. Mn(2+) is required as a cofactor.

The protein resides in the mitochondrion. The protein localises to the cytoplasm. Its subcellular location is the cytosol. The enzyme catalyses a 3-acylpyruvate + H2O = a carboxylate + pyruvate + H(+). It carries out the reaction acetylpyruvate + H2O = acetate + pyruvate + H(+). The catalysed reaction is 3-fumarylpyruvate + H2O = fumarate + pyruvate + H(+). It catalyses the reaction oxaloacetate + H(+) = pyruvate + CO2. Its function is as follows. Mitochondrial protein that acts as an oxaloacetate decarboxylase (ODx), catalyzing the decarboxylation of oxaloacetate (OAA) to pyruvate and CO(2), and as such is likely a regulatory enzyme in the TCA cycle. Also displays acylpyruvase activity, being able to hydrolyze acetylpyruvate and fumarylpyruvate in vitro. The polypeptide is Oxaloacetate decarboxylase, mitochondrial (fahd1) (Dictyostelium discoideum (Social amoeba)).